The sequence spans 156 residues: MSRKNQAPKREVLPDPLYNSKLVTRLINRVMLDGKRGTAASIVYGAFDQIKEATGNDALEVFETAMENIMPVLEVRARRVGGSNYQVPVEVRPERRTTLGLRWLVTIARQRGEHTMVDRLAKEILDASNNTGAAVKKREDTHRMAEANRAFAHFRW.

It belongs to the universal ribosomal protein uS7 family. In terms of assembly, part of the 30S ribosomal subunit. Contacts proteins S9 and S11.

Functionally, one of the primary rRNA binding proteins, it binds directly to 16S rRNA where it nucleates assembly of the head domain of the 30S subunit. Is located at the subunit interface close to the decoding center, probably blocks exit of the E-site tRNA. In Streptococcus sanguinis (strain SK36), this protein is Small ribosomal subunit protein uS7.